A 303-amino-acid polypeptide reads, in one-letter code: Methyltransferase ktnA (303 aa).

The protein belongs to the class I-like SAM-binding methyltransferase superfamily. It depends on S-adenosyl-L-methionine as a cofactor.

Its function is as follows. Non-reducing polyketide synthase; part of the gene cluster that mediates the biosynthesis of the bicoumarin kotanin. The non-reducing polyketide synthase ktnS first catalyzes the formation of the pentaketidic 4,7-dihydroxy-5-methylcoumarin from acetyl coenzyme A and 4 malonyl coenzyme A molecules. Further O-methylation by ktnB leads to the formation of 7-demethylsiderin. Then, an oxidative phenol coupling catalyzed by the cytochrome P450 monooxygenase ktnC forms the 8,8'-dimer P-orlandin via dimerization the monomeric precursor, 7-demethylsiderin. P-orlandin is subsequently O-methylated in a stepwise fashion to demethylkotanin and kotanin. The function of ktnA within the pathway has not been determined yet. This chain is Methyltransferase ktnA, found in Aspergillus niger (strain ATCC MYA-4892 / CBS 513.88 / FGSC A1513).